A 284-amino-acid polypeptide reads, in one-letter code: Pantothenate synthetase (284 aa).

Residue Met-30–His-37 participates in ATP binding. His-37 acts as the Proton donor in catalysis. (R)-pantoate is bound at residue Gln-61. Position 61 (Gln-61) interacts with beta-alanine. Gly-149–Asp-152 is a binding site for ATP. Gln-155 serves as a coordination point for (R)-pantoate. ATP is bound by residues Ile-178 and Leu-186–Arg-189.

The protein belongs to the pantothenate synthetase family. As to quaternary structure, homodimer.

It is found in the cytoplasm. It catalyses the reaction (R)-pantoate + beta-alanine + ATP = (R)-pantothenate + AMP + diphosphate + H(+). The protein operates within cofactor biosynthesis; (R)-pantothenate biosynthesis; (R)-pantothenate from (R)-pantoate and beta-alanine: step 1/1. Functionally, catalyzes the condensation of pantoate with beta-alanine in an ATP-dependent reaction via a pantoyl-adenylate intermediate. The chain is Pantothenate synthetase from Salmonella newport (strain SL254).